Reading from the N-terminus, the 352-residue chain is SKP1-like protein 20 (352 aa).

Positions 108 to 167 (TSAADSLQLKPLVDLTSRALARIIEGKNPEEIREIFHLPDDLTEEEKLEPLKNSMDDPRI) are interaction with the F-box domain of F-box proteins. Disordered stretches follow at residues 214 to 251 (KAVK…RSKQ) and 267 to 288 (LLSA…DIDD). Positions 216–230 (VKMSKGKKKKKKKKD) are enriched in basic residues. Positions 239-249 (IHDKESHDLRS) are enriched in basic and acidic residues.

This sequence belongs to the SKP1 family. As to quaternary structure, part of a SCF (SKP1-cullin-F-box) protein ligase complex. As to expression, expressed in young seedlings, roots, leaves, floral stems, inflorescences, and siliques.

It is found in the nucleus. It participates in protein modification; protein ubiquitination. Functionally, involved in ubiquitination and subsequent proteasomal degradation of target proteins. Together with CUL1, RBX1 and a F-box protein, it forms a SCF E3 ubiquitin ligase complex. The functional specificity of this complex depends on the type of F-box protein. In the SCF complex, it serves as an adapter that links the F-box protein to CUL1. The protein is SKP1-like protein 20 (ASK20) of Arabidopsis thaliana (Mouse-ear cress).